Reading from the N-terminus, the 189-residue chain is 3-hydroxyanthranilate 3,4-dioxygenase (189 aa).

Residue R46 coordinates O2. Fe cation contacts are provided by H50, E56, and H94. E56 serves as a coordination point for substrate. The substrate site is built by R98 and E109. Fe cation-binding residues include C124, C127, C161, and C164.

Belongs to the 3-HAO family. In terms of assembly, homodimer. Fe(2+) serves as cofactor.

It catalyses the reaction 3-hydroxyanthranilate + O2 = (2Z,4Z)-2-amino-3-carboxymuconate 6-semialdehyde. Its pathway is cofactor biosynthesis; NAD(+) biosynthesis; quinolinate from L-kynurenine: step 3/3. In terms of biological role, catalyzes the oxidative ring opening of 3-hydroxyanthranilate to 2-amino-3-carboxymuconate semialdehyde, which spontaneously cyclizes to quinolinate. The polypeptide is 3-hydroxyanthranilate 3,4-dioxygenase (Shewanella woodyi (strain ATCC 51908 / MS32)).